Reading from the N-terminus, the 647-residue chain is Shugoshin-2 (647 aa).

At Ser7 the chain carries Phosphoserine. 2 coiled-coil regions span residues 28 to 87 and 125 to 145; these read SKAQ…FHEE and DEES…HDVS. The interval 171–295 is disordered; that stretch reads REANVFSDTQ…DTVIQSTPTK (125 aa). Residues 200-210 show a composition bias toward low complexity; the sequence is NLSNSKPVNNN. A Phosphoserine modification is found at Ser240. 2 stretches are compositionally biased toward polar residues: residues 242-253 and 282-293; these read KSLSNKINNQAA and RIQSDTVIQSTP. At Thr292 the chain carries Phosphothreonine. Residues Ser332 and Ser335 each carry the phosphoserine modification. Composition is skewed to polar residues over residues 375-396 and 462-478; these read SLTS…NMTV and EPPS…NNSP. Disordered regions lie at residues 375–416, 453–486, 522–579, and 593–647; these read SLTS…DSSV, RNPP…SLQG, TNLK…ERKK, and RNFD…TLNL. Composition is skewed to basic and acidic residues over residues 528-541 and 593-602; these read NEND…SRRE and RNFDLPSDHV. Over residues 621 to 647 the composition is skewed to polar residues; it reads KTETANITSEAPTTSEVTLENSETLNL.

This sequence belongs to the shugoshin family.

The protein resides in the chromosome. Its subcellular location is the centromere. Its function is as follows. Involved in chromosome cohesion during mitosis and meiosis by preventing premature dissociation of cohesin complex from centromeres after prophase, when most of cohesin complex dissociates from chromosomes arms. Required for faithful mitotic chromosome segregation and proper kinetochore orientation during meiosis I. In contrast to sgo1, it is dispensable for centromeric protection of rec8 during meiosis I as well as protection of rad21 during mitosis. Required to sense the lack of tension at centromeres during mitosis. The chain is Shugoshin-2 (sgo2) from Schizosaccharomyces pombe (strain 972 / ATCC 24843) (Fission yeast).